Here is a 139-residue protein sequence, read N- to C-terminus: Iron-sulfur cluster assembly 1 homolog, mitochondrial (139 aa).

Residues Cys-52, Cys-117, and Cys-119 each coordinate Fe cation.

Belongs to the HesB/IscA family.

It is found in the mitochondrion. Functionally, involved in the assembly of mitochondrial iron-sulfur proteins. Probably involved in the binding of an intermediate of Fe/S cluster assembly. The polypeptide is Iron-sulfur cluster assembly 1 homolog, mitochondrial (isca1) (Dictyostelium discoideum (Social amoeba)).